An 840-amino-acid chain; its full sequence is SLIT and NTRK-like protein 6 (840 aa).

Positions 1-18 are cleaved as a signal peptide; sequence MKLWTYLLYPSLLACLSL. An LRRNT 1 domain is found at 22–67; sequence SPMPSVRGSCDTLCNCEEKDGIMIINCEEKGINKLSQISVPPSRPF. The Extracellular portion of the chain corresponds to 23 to 609; it reads PMPSVRGSCD…LTDAVPLSVL (587 aa). 5 LRR repeats span residues 89-110, 113-134, 137-158, 161-182, and 184-205; these read NALSIHLGFNNIADIETGAFNG, LLKQLHINHNSLEILKEDTFHG, NLEFLQADNNFITIIEPSAFSK, RLKVLILNDNAIESLPPNIFRF, and PLTHLDLRGNQLQTLPYVGFLE. In terms of domain architecture, LRRCT 1 spans 218 to 269; it reads NKWACNCELLQLKNWLENMPPQSIIGDVICYSPPPFKGSVLSRLKKESFCPT. In terms of domain architecture, LRRNT 2 spans 319–360; sequence PSTQLPVPYCPIPCNCKVLSPSGLLIHCQERNIESLSDLQPP. LRR repeat units lie at residues 363 to 384, 387 to 408, 411 to 432, 435 to 456, 459 to 480, and 482 to 503; these read NPRKLILAGNIIHTLMKSDLTD, TLEMLHLGNNRIEVLEEGSFMN, RLQKLYLNGNHLTKLNKGMFLG, SLEYLYLEYNAVKEILPGTFNP, KLKVLYLNNNLLQVLPAHIFLG, and PLTRVNLKTNQFTHLPVSNILD. The LRRCT 2 domain occupies 516–567; it reads NPWDCSCDLVGLQQWIHKLGKGTMTDDILCTSPGHLDKKELKALNSDLLCPG. The helical transmembrane segment at 610 to 630 threads the bilayer; that stretch reads ILGLLIVFITIVFCAAGIVVF. Residues 631 to 840 are Cytoplasmic-facing; the sequence is VLHRRRRYKK…DYLEVLEQQT (210 aa). Residues 717 to 726 show a composition bias toward basic and acidic residues; sequence QRSLLERENH. The segment at 717-736 is disordered; it reads QRSLLERENHSPLTGSNMKY. Polar residues predominate over residues 727-736; the sequence is SPLTGSNMKY.

It belongs to the SLITRK family. As to expression, in the embryo, expressed in otic cyst, lateral trunk epidermis and underlying mesodermal tissue, limb bud, maxillary process, cochlea, retina, tongue, tooth primordium, central nervous system, and primordia of visceral organs including lung, gastrointestinal tract and pancreas. In the central nervous system, expressed primarily in dorsal thalamus, cerebellum and medulla.

The protein resides in the cell membrane. Regulator of neurite outgrowth required for normal hearing and vision. The sequence is that of SLIT and NTRK-like protein 6 (Slitrk6) from Mus musculus (Mouse).